The following is a 70-amino-acid chain: UPF0352 protein Sden_2336 (70 aa).

The protein belongs to the UPF0352 family.

This chain is UPF0352 protein Sden_2336, found in Shewanella denitrificans (strain OS217 / ATCC BAA-1090 / DSM 15013).